The sequence spans 195 residues: Pyridoxal 5'-phosphate synthase subunit PdxT (195 aa).

L-glutamine is bound at residue 49–51 (GES). Cys81 (nucleophile) is an active-site residue. Residues Arg113 and 141 to 142 (IR) contribute to the L-glutamine site. Residues His177 and Glu179 each act as charge relay system in the active site.

This sequence belongs to the glutaminase PdxT/SNO family. As to quaternary structure, in the presence of PdxS, forms a dodecamer of heterodimers. Only shows activity in the heterodimer.

It catalyses the reaction aldehydo-D-ribose 5-phosphate + D-glyceraldehyde 3-phosphate + L-glutamine = pyridoxal 5'-phosphate + L-glutamate + phosphate + 3 H2O + H(+). The enzyme catalyses L-glutamine + H2O = L-glutamate + NH4(+). It functions in the pathway cofactor biosynthesis; pyridoxal 5'-phosphate biosynthesis. Catalyzes the hydrolysis of glutamine to glutamate and ammonia as part of the biosynthesis of pyridoxal 5'-phosphate. The resulting ammonia molecule is channeled to the active site of PdxS. This is Pyridoxal 5'-phosphate synthase subunit PdxT from Mycolicibacterium vanbaalenii (strain DSM 7251 / JCM 13017 / BCRC 16820 / KCTC 9966 / NRRL B-24157 / PYR-1) (Mycobacterium vanbaalenii).